The following is a 113-amino-acid chain: Large ribosomal subunit protein bL19 (113 aa).

This sequence belongs to the bacterial ribosomal protein bL19 family.

Functionally, this protein is located at the 30S-50S ribosomal subunit interface and may play a role in the structure and function of the aminoacyl-tRNA binding site. The protein is Large ribosomal subunit protein bL19 of Mycolicibacterium smegmatis (strain ATCC 700084 / mc(2)155) (Mycobacterium smegmatis).